The primary structure comprises 318 residues: Protein LplB (318 aa).

Transmembrane regions (helical) follow at residues 35 to 55 (LIPGLLYFLIFKYLPMWGVLI), 94 to 114 (LMLASLDLLFAFPAPLILALL), 130 to 150 (FIYVPHFVSWTIVVSITFVFF), 182 to 202 (IVMQSIWKETGWGTILFLAAL), 236 to 256 (IIVLLILRIGSFLNLGFEQVY), and 289 to 309 (AVGLFKSVVGIILIFGANYIA). The ABC transmembrane type-1 domain occupies 90–305 (LRNTLMLASL…VVGIILIFGA (216 aa)).

The protein belongs to the binding-protein-dependent transport system permease family. MalFG subfamily.

The protein resides in the cell membrane. This Bacillus subtilis (strain 168) protein is Protein LplB (lplB).